The following is a 302-amino-acid chain: Aspartate carbamoyltransferase catalytic subunit (302 aa).

Arg51 and Thr52 together coordinate carbamoyl phosphate. Residue Lys80 coordinates L-aspartate. Residues Arg101, His129, and Gln132 each coordinate carbamoyl phosphate. Residues Arg162 and Arg223 each contribute to the L-aspartate site. Carbamoyl phosphate-binding residues include Leu261 and Pro262.

Belongs to the aspartate/ornithine carbamoyltransferase superfamily. ATCase family. As to quaternary structure, heterododecamer (2C3:3R2) of six catalytic PyrB chains organized as two trimers (C3), and six regulatory PyrI chains organized as three dimers (R2).

The enzyme catalyses carbamoyl phosphate + L-aspartate = N-carbamoyl-L-aspartate + phosphate + H(+). It participates in pyrimidine metabolism; UMP biosynthesis via de novo pathway; (S)-dihydroorotate from bicarbonate: step 2/3. Catalyzes the condensation of carbamoyl phosphate and aspartate to form carbamoyl aspartate and inorganic phosphate, the committed step in the de novo pyrimidine nucleotide biosynthesis pathway. This is Aspartate carbamoyltransferase catalytic subunit from Chromobacterium violaceum (strain ATCC 12472 / DSM 30191 / JCM 1249 / CCUG 213 / NBRC 12614 / NCIMB 9131 / NCTC 9757 / MK).